The chain runs to 550 residues: Parathyroid hormone 2 receptor (550 aa).

Residues 1–24 (MAGLGASLHVWGWLMLGSCLLARA) form the signal peptide. At 27 to 145 (DSDGTITIEE…GKQEFFERLY (119 aa)) the chain is on the extracellular side. N-linked (GlcNAc...) asparagine glycosylation is found at asparagine 51, asparagine 106, asparagine 116, and asparagine 121. A helical transmembrane segment spans residues 146–169 (VMYTVGYSISFGSLAVAILIIGYF). At 170-176 (RRLHCTR) the chain is on the cytoplasmic side. A helical transmembrane segment spans residues 177–196 (NYIHMHLFVSFMLRATSIFV). The Extracellular segment spans residues 197–237 (KDRVVHAHIGVKELESLIMQDDPQNSIEATSVDKSQYIGCK). A helical membrane pass occupies residues 238-260 (IAVVMFIYFLATNYYWILVEGLY). Residues 261–275 (LHNLIFVAFFSDTKY) lie on the Cytoplasmic side of the membrane. The helical transmembrane segment at 276–297 (LWGFILIGWGFPAAFVAAWAVA) threads the bilayer. Residues 298 to 316 (RATLADARCWELSAGDIKW) are Extracellular-facing. A helical transmembrane segment spans residues 317–337 (IYQAPILAAIGLNFILFLNTV). Topologically, residues 338 to 364 (RVLATKIWETNAVGHDTRKQYRKLAKS) are cytoplasmic. A helical membrane pass occupies residues 365-383 (TLVLVLVFGVHYIVFVCLP). Topologically, residues 384 to 394 (HSFTGLGWEIR) are extracellular. The chain crosses the membrane as a helical span at residues 395–417 (MHCELFFNSFQGFFVSIIYCYCN). The Cytoplasmic segment spans residues 418–550 (GEVQAEVKKM…GCQGETEDVL (133 aa)). Basic and acidic residues predominate over residues 511 to 531 (EETKEDSGRQGDDILMEKPSR). Positions 511–550 (EETKEDSGRQGDDILMEKPSRPMESNPDTEGCQGETEDVL) are disordered.

It belongs to the G-protein coupled receptor 2 family. Binds to TIPF39/TIP39. In terms of tissue distribution, expressed abundantly in brain and pancreas. Also expressed in the testis.

The protein resides in the cell membrane. In terms of biological role, this is a specific receptor for parathyroid hormone. The activity of this receptor is mediated by G proteins which activate adenylyl cyclase. PTH2R may be responsible for PTH effects in a number of physiological systems. It may play a significant role in pancreatic function. PTH2R presence in neurons indicates that it may function as a neurotransmitter receptor. The protein is Parathyroid hormone 2 receptor (PTH2R) of Homo sapiens (Human).